A 112-amino-acid polypeptide reads, in one-letter code: 2Fe-2S ferredoxin (112 aa).

The region spanning 5 to 107 is the 2Fe-2S ferredoxin-type domain; it reads IKVTFIINDG…GIKVHLPAAT (103 aa). [2Fe-2S] cluster is bound by residues C42, C48, C51, and C88.

This sequence belongs to the adrenodoxin/putidaredoxin family. It depends on [2Fe-2S] cluster as a cofactor.

Functionally, ferredoxin are iron-sulfur proteins that transfer electrons in a wide variety of metabolic reactions. The chain is 2Fe-2S ferredoxin (fdxB) from Rickettsia rickettsii.